The primary structure comprises 236 residues: tRNA (guanine-N(7)-)-methyltransferase (236 aa).

Residues G54, 77–78, 110–111, and L130 each bind S-adenosyl-L-methionine; these read EI and NA. The active site involves D133. 208 to 210 contacts S-adenosyl-L-methionine; the sequence is TEE.

The protein belongs to the class I-like SAM-binding methyltransferase superfamily. TrmB family.

It localises to the nucleus. The enzyme catalyses guanosine(46) in tRNA + S-adenosyl-L-methionine = N(7)-methylguanosine(46) in tRNA + S-adenosyl-L-homocysteine. It participates in tRNA modification; N(7)-methylguanine-tRNA biosynthesis. Its function is as follows. Catalyzes the formation of N(7)-methylguanine at position 46 (m7G46) in tRNA. In Bombyx mori (Silk moth), this protein is tRNA (guanine-N(7)-)-methyltransferase.